The chain runs to 503 residues: von Willebrand factor A domain-containing protein 1 (503 aa).

An N-terminal signal peptide occupies residues 1 to 21; that stretch reads MEVRKALTCVFLTVFLCSGDA. Residues 36 to 213 form the VWFA domain; the sequence is DVLFLLDSSG…IIGEDLRNSI (178 aa). Fibronectin type-III domains follow at residues 218-324 and 331-423; these read RAER…TVNP and LLSS…VLPA.

Homodimer or homomultimer; disulfide-linked.

The protein resides in the secreted. The protein localises to the extracellular space. It is found in the extracellular matrix. Its subcellular location is the basement membrane. In terms of biological role, promotes matrix assembly. Involved in the organization of skeletal muscles and in the formation of neuromuscular junctions. The sequence is that of von Willebrand factor A domain-containing protein 1 from Danio rerio (Zebrafish).